The primary structure comprises 4293 residues: Polycystin-1 (4293 aa).

The first 23 residues, 1–23 (MPLGAPALLALALGLGLWLGALA), serve as a signal peptide directing secretion. One can recognise an LRRNT domain in the interval 24 to 67 (GDPGRGCGPCPLPCFCGPAPDAACRVNCSGRWLQTLGPSLRIPA). Residues 24–3066 (GDPGRGCGPC…IFPEPSASIN (3043 aa)) are Extracellular-facing. N-linked (GlcNAc...) asparagine glycans are attached at residues asparagine 50 and asparagine 89. LRR repeat units follow at residues 68-91 (DATA…VNLS) and 92-113 (ALVE…VFAN). 2 N-linked (GlcNAc...) asparagine glycosylation sites follow: asparagine 116 and asparagine 121. Positions 125-178 (NPFECNCGLAWLPRWAKEHQVHVVQSEATTCRGPIPLAGQPLLSIPLLDNACGE) constitute an LRRCT domain. In terms of domain architecture, WSC spans 177–271 (GEEYVACLPD…PTLLQHTFPA (95 aa)). Asparagine 187 and asparagine 239 each carry an N-linked (GlcNAc...) asparagine glycan. A PKD 1 domain is found at 272 to 359 (SPGATLVGPH…VQVEATPTVL (88 aa)). N-linked (GlcNAc...) asparagine glycosylation occurs at asparagine 370. The C-type lectin domain occupies 415–530 (GNGHCYRLVA…CSAPHSYVCE (116 aa)). Cystine bridges form between cysteine 436-cysteine 529 and cysteine 507-cysteine 521. A disordered region spans residues 613–632 (GGAAAVPEGSSEPDNRTEPA). A glycan (N-linked (GlcNAc...) asparagine) is linked at asparagine 627. An LDL-receptor class A; atypical domain is found at 633 to 666 (PKCVPEELWCPGANVCIPFDASCNSHVCINGSVS). 2 cysteine pairs are disulfide-bonded: cysteine 635/cysteine 648 and cysteine 642/cysteine 660. 35 N-linked (GlcNAc...) asparagine glycosylation sites follow: asparagine 662, asparagine 740, asparagine 804, asparagine 835, asparagine 848, asparagine 859, asparagine 884, asparagine 915, asparagine 998, asparagine 1004, asparagine 1028, asparagine 1084, asparagine 1096, asparagine 1107, asparagine 1172, asparagine 1188, asparagine 1234, asparagine 1263, asparagine 1330, asparagine 1342, asparagine 1376, asparagine 1444, asparagine 1449, asparagine 1468, asparagine 1535, asparagine 1548, asparagine 1557, asparagine 1643, asparagine 1657, asparagine 1706, asparagine 1730, asparagine 1788, asparagine 1831, asparagine 1863, and asparagine 1876. PKD domains follow at residues 849-922 (ATAT…RVTA), 929-1014 (LRAV…NKMH), 1017-1123 (WVSA…LPNV), 1121-1209 (PNVA…LHGL), 1207-1292 (HGLT…EVLH), 1288-1377 (LEVL…IRNI), 1376-1463 (NITL…VLVT), 1462-1545 (VTGI…VRGL), 1544-1629 (GLTI…IEGL), 1630-1718 (QVAG…VESL), 1716-1802 (ESLI…VGGL), 1804-1886 (IRTS…IVNL), 1885-1970 (NLML…VVGL), 1972-2053 (VPNC…MVEV), and 2056-2144 (IIQY…ACRE). N-linked (GlcNAc...) asparagine glycans are attached at residues asparagine 1987, asparagine 2046, asparagine 2070, asparagine 2121, asparagine 2244, asparagine 2349, asparagine 2391, asparagine 2408, asparagine 2414, asparagine 2563, asparagine 2640, asparagine 2713, asparagine 2749, asparagine 2813, asparagine 2836, asparagine 2873, asparagine 2948, and asparagine 2986. The region spanning 2142 to 2828 (CREPEVEVAL…QLIFLVDSNP (687 aa)) is the REJ domain. One can recognise a GAIN-B domain in the interval 2857-3055 (PIEQLAAERA…SLFVPPSHVQ (199 aa)). A disulfide bond links cysteine 3007 and cysteine 3035. A GPS region spans residues 3007-3055 (CQYFSEEMMMWRTEGIVPLEETSPSQAVCLTRHLTAFGASLFVPPSHVQ). The chain crosses the membrane as a helical span at residues 3067 to 3087 (YIVLLTCVICLVTYVVMAMIL). Topologically, residues 3088–3269 (RKLDQLDVSR…DRPPRSRFTR (182 aa)) are cytoplasmic. The region spanning 3110-3225 (FKYEILVKTG…EANGGLVEKE (116 aa)) is the PLAT domain. The chain crosses the membrane as a helical span at residues 3270–3290 (VQRVTCCVLLLCLFLAANAVW). The Extracellular portion of the chain corresponds to 3291–3315 (YGVVRDTTYSMGPVSSLISPGVDTV). The helical transmembrane segment at 3316 to 3336 (AIGLVSSVVVYPVYLAVLFLF) threads the bilayer. The Cytoplasmic segment spans residues 3337 to 3549 (RMSRSKVSGD…LPAWCAPLAH (213 aa)). A helical transmembrane segment spans residues 3550–3570 (GLSLLLVAVAVAVSGWIGASF). Over 3571–3572 (PP) the chain is Extracellular. A helical transmembrane segment spans residues 3573-3593 (SVSVMWLLSSSSSFLASFLGW). Over 3594–3655 (EPLKVLLEAL…LAKEEARKVK (62 aa)) the chain is Cytoplasmic. The chain crosses the membrane as a helical span at residues 3656-3676 (RLHDMLKRLLVYMLFLLVTLL). At 3677–3891 (ANYGDASCHG…RLSTGLSLPL (215 aa)) the chain is on the extracellular side. 2 N-linked (GlcNAc...) asparagine glycosylation sites follow: asparagine 3728 and asparagine 3780. Residues 3892-3912 (LTSVCLLLFALYFSMAEVQTW) form a helical membrane-spanning segment. Topologically, residues 3913–3925 (RKDGCACTARPDT) are cytoplasmic. A helical transmembrane segment spans residues 3926 to 3946 (WARCLLVILTAATGLVRLAQL). At 3947-3974 (GIADRQWTHFVQDHPRHFTSFDQVAQLG) the chain is on the extracellular side. Residues 3975 to 3995 (SVARGLAASLLFLLLVKAAQQ) traverse the membrane as a helical segment. Topologically, residues 3996 to 4017 (LRFVRQWSVFGKTLCRALPELM) are cytoplasmic. Residues 4018 to 4038 (GATLGLVLLGVAYAQMAILLI) form a helical membrane-spanning segment. Residues 4039-4080 (SSGADTLYNMARAFLVLCPGARVPTLCPSESWYLSPLLCVGL) are Extracellular-facing. A helical membrane pass occupies residues 4081 to 4100 (WALRVWGALRLGAILLRWRY). The Cytoplasmic portion of the chain corresponds to 4101–4293 (HALRGELYRP…PNNKVHPSST (193 aa)). Disordered regions lie at residues 4150–4197 (PLPS…STLK) and 4235–4293 (SLQG…PSST). A compositionally biased stretch (low complexity) spans 4153-4172 (SRSSRGSKSSPVVLPPSSGS). At serine 4156 the chain carries Phosphoserine; by PRKX; in vitro. The span at 4173–4195 (EASHPSTSSSQPDGPSASLSRST) shows a compositional bias: polar residues. Positions 4210-4241 (ESLLVQFDRLNQATEDVYQLEQQLQSLQGHGH) form a coiled coil. Positions 4238–4256 (GHGHNGPPSSPSPGCFPGS) are enriched in low complexity. A compositionally biased stretch (polar residues) spans 4265–4276 (SRASQGLDQTVG).

The protein belongs to the polycystin family. Component of the heterotetrameric polycystin channel complex with PKD2; the tetramer contains one PKD1 chain and three PKD2 chains. Interacts with PKD2; the interaction is required for ciliary localization. Interacts with PKD2L1. Interacts with PRKX; involved in differentiation and controlled morphogenesis of the kidney. Interacts (via extracellular domain) with WNT3A, WNT4 and WNT9B. Interacts with WNT5A, DVL1 and DVL2. Interacts with NPHP1 (via SH3 domain). Interacts with BBS1, BBS4, BBS5 and TTC8. Interacts with RGS7. Interacts (via C-terminal domain) with RABEP1; the interaction connects PKD1:PKD2 to GGA1 and ARL3 that mediate the ciliary targeting. Interacts (via the PKD repeats in the N-terminal extracellular region) with EPCIP; the interaction is not dependent on N-glycosylation of either protein. N-glycosylated. Post-translationally, after synthesis, undergoes autoproteolytic cleavage between Leu-3040 and Thr-3041 in the GPS region of the GAIN-B domain. Cleavage at the GPS region occurs through a cis-autoproteolytic mechanism involving an ester-intermediate via N-O acyl rearrangement. This process takes place in the early secretory pathway, depends on initial N-glycosylation, and requires the REJ domain. PKD1 is ubiquitously and incompletely cleaved in wild-type mice, so that uncleaved and cleaved PKD1 molecules coexist. The differential patterns of cleavage during embryonic development, as well as in adult mice, suggest different functions of uncleaved and cleaved molecules.

The protein resides in the cell membrane. It is found in the cell projection. It localises to the cilium. The protein localises to the endoplasmic reticulum. Its subcellular location is the golgi apparatus. The protein resides in the vesicle. It is found in the secreted. It localises to the extracellular exosome. Functionally, component of a heteromeric calcium-permeable ion channel formed by PKD1 and PKD2 that is activated by interaction between PKD1 and a Wnt family member, such as WNT3A and WNT9B. Both PKD1 and PKD2 are required for channel activity. Involved in renal tubulogenesis. Involved in fluid-flow mechanosensation by the primary cilium in renal epithelium. Acts as a regulator of cilium length, together with PKD2. The dynamic control of cilium length is essential in the regulation of mechanotransductive signaling. The cilium length response creates a negative feedback loop whereby fluid shear-mediated deflection of the primary cilium, which decreases intracellular cAMP, leads to cilium shortening and thus decreases flow-induced signaling. May be an ion-channel regulator. Involved in adhesive protein-protein and protein-carbohydrate interactions. Likely to be involved with polycystin-1-interacting protein 1 in the detection, sequestration and exocytosis of senescent mitochondria. The sequence is that of Polycystin-1 from Mus musculus (Mouse).